An 893-amino-acid polypeptide reads, in one-letter code: Translation initiation factor IF-2 (893 aa).

Disordered regions lie at residues K51–E203 and E216–Q299. Basic and acidic residues-rich tracts occupy residues A102–E203, E216–Y238, and H245–P261. Positions G392 to T561 constitute a tr-type G domain. A G1 region spans residues G401 to T408. G401–T408 contributes to the GTP binding site. Residues G426–H430 are G2. The interval D447–G450 is G3. GTP-binding positions include D447 to H451 and N501 to D504. Residues N501–D504 form a G4 region. Residues S537–K539 are G5.

The protein belongs to the TRAFAC class translation factor GTPase superfamily. Classic translation factor GTPase family. IF-2 subfamily.

It localises to the cytoplasm. Its function is as follows. One of the essential components for the initiation of protein synthesis. Protects formylmethionyl-tRNA from spontaneous hydrolysis and promotes its binding to the 30S ribosomal subunits. Also involved in the hydrolysis of GTP during the formation of the 70S ribosomal complex. This is Translation initiation factor IF-2 from Aliivibrio fischeri (strain ATCC 700601 / ES114) (Vibrio fischeri).